The primary structure comprises 326 residues: DNA-binding death effector domain-containing protein 2 (326 aa).

Residues 25 to 104 (SLHRMFEVVG…RHDLLPHLAR (80 aa)) form the DED domain. The short motif at 104–109 (RKRRRP) is the Nuclear localization signal element. A disordered region spans residues 104–194 (RKRRRPVSPE…PARPSSEGKV (91 aa)). Residues 136–146 (SSSSANSQQGQ) show a composition bias toward low complexity. A Bipartite nuclear localization signal motif is present at residues 155-173 (KRQRRSRGRPSGGARRRRR). Residues 155 to 174 (KRQRRSRGRPSGGARRRRRG) show a composition bias toward basic residues. The segment covering 175-191 (APAAPQQQSEPARPSSE) has biased composition (low complexity).

As to quaternary structure, interacts with CASP8, CASP10 and GTF3C3. Homodimerizes and heterodimerizes with DEDD. Expressed in most tissues. High levels were found in liver, kidney, heart, ovary, spleen, testes, skeletal muscle and peripheral blood leukocytes. Expression was absent or low in colon and small intestine. Expression is relatively high in the tumor cell lines chronic myologenous leukemia K-562 and the colorectal adenocarcinoma SW480. Expression is moderate in the cervical carcinoma HeLa, the Burkitt's lymphoma Raji, the lung carcinoma A-549, and the melanoma G-361. In contrast, two leukemia cell lines, HL-60 (promyelocytic leukemia) and MOLT-4 (lymphoblastic leukemia), show relatively low levels.

The protein localises to the nucleus. Its subcellular location is the nucleolus. Functionally, may play a critical role in death receptor-induced apoptosis and may target CASP8 and CASP10 to the nucleus. May regulate degradation of intermediate filaments during apoptosis. May play a role in the general transcription machinery in the nucleus and might be an important regulator of the activity of GTF3C3. The protein is DNA-binding death effector domain-containing protein 2 (DEDD2) of Homo sapiens (Human).